Reading from the N-terminus, the 334-residue chain is Deoxyhypusine synthase (334 aa).

NAD(+)-binding positions include 73–77 (SNIIS), 99–101 (TGG), glutamate 105, and aspartate 207. 104-105 (EE) provides a ligand contact to spermidine. Residues aspartate 212 and histidine 256 each coordinate spermidine. An NAD(+)-binding site is contributed by 276 to 277 (NA). Residues 282-284 (GSD) and 291-297 (EAVSWGK) contribute to the spermidine site. Lysine 297 functions as the Nucleophile in the catalytic mechanism. Residue 310 to 311 (DA) participates in NAD(+) binding.

It belongs to the deoxyhypusine synthase family. It depends on NAD(+) as a cofactor.

The catalysed reaction is [eIF5A protein]-L-lysine + spermidine = [eIF5A protein]-deoxyhypusine + propane-1,3-diamine. It functions in the pathway protein modification; eIF5A hypusination. Functionally, catalyzes the NAD-dependent oxidative cleavage of spermidine and the subsequent transfer of the butylamine moiety of spermidine to the epsilon-amino group of a specific lysine residue of the eIF-5A precursor protein to form the intermediate deoxyhypusine residue. This is Deoxyhypusine synthase (DYS1) from Encephalitozoon cuniculi (strain GB-M1) (Microsporidian parasite).